Here is an 856-residue protein sequence, read N- to C-terminus: Serine/threonine-protein phosphatase 6 regulatory subunit 1 (856 aa).

An interaction with PPP6C region spans residues 10 to 403 (SSHLDTLLEK…VFNNFLHAQV (394 aa)). Serine 232 is modified (phosphoserine). At threonine 524 the chain carries Phosphothreonine. Phosphoserine is present on residues serine 529, serine 530, and serine 531. Acidic residues predominate over residues 621–630 (DDEEEEEEEG). Disordered regions lie at residues 621–770 (DDEE…KVAE) and 792–856 (RSAP…SGSQ). Residues serine 633 and serine 636 each carry the phosphoserine modification. Over residues 644 to 656 (QGSQPVRASQASQ) the composition is skewed to polar residues. Positions 667 to 683 (DSEEEDEEEDEEEDEGA) are enriched in acidic residues. A phosphoserine mark is found at serine 698 and serine 739. A compositionally biased stretch (polar residues) spans 794–809 (APSSLDSATRDPSTSV). The residue at position 826 (serine 826) is a Phosphoserine. Over residues 842-856 (PNGSTPGGPISSGSQ) the composition is skewed to low complexity.

This sequence belongs to the SAPS family. As to quaternary structure, protein phosphatase 6 (PP6) holoenzyme is proposed to be a heterotrimeric complex formed of the catalytic subunit, a SAPS domain-containing subunit (PP6R) and an ankyrin repeat-domain containing regulatory subunit (ARS). Interacts with PPP6C and NFKBIE. Interacts with ANKRD28, ANKRD44 and ANKRD52. As to expression, ubiquitous with highest expression in lung, spleen and bladder.

The protein resides in the cytoplasm. In terms of biological role, regulatory subunit of protein phosphatase 6 (PP6). May function as a scaffolding PP6 subunit. Involved in the PP6-mediated dephosphorylation of NFKBIE opposing its degradation in response to TNF-alpha. This Mus musculus (Mouse) protein is Serine/threonine-protein phosphatase 6 regulatory subunit 1 (Ppp6r1).